The following is a 53-amino-acid chain: MGMSFSHLLIVLLIIFVLFGAGKLPQVMSDLAKGLKAFKDGMKDDGSDNDKNK.

Residues Met-1–Ala-21 form a helical membrane-spanning segment.

The protein belongs to the TatA/E family. The Tat system comprises two distinct complexes: a TatABC complex, containing multiple copies of TatA, TatB and TatC subunits, and a separate TatA complex, containing only TatA subunits. Substrates initially bind to the TatABC complex, which probably triggers association of the separate TatA complex to form the active translocon.

It is found in the cell inner membrane. Part of the twin-arginine translocation (Tat) system that transports large folded proteins containing a characteristic twin-arginine motif in their signal peptide across membranes. TatA could form the protein-conducting channel of the Tat system. The polypeptide is Sec-independent protein translocase protein TatA (Rickettsia rickettsii (strain Iowa)).